The sequence spans 100 residues: Replication restart protein PriB (100 aa).

One can recognise an SSB domain in the interval 1 to 100 (MTNRMELSGT…VLHADNITQI (100 aa)).

It belongs to the PriB family. Homodimer. Interacts with PriA and DnaT. Component of the replication restart primosome. Primosome assembly occurs via a 'hand-off' mechanism. PriA binds to replication forks, subsequently PriB then DnaT bind; DnaT then displaces ssDNA to generate the helicase loading substrate.

In terms of biological role, involved in the restart of stalled replication forks, which reloads the replicative helicase on sites other than the origin of replication; the PriA-PriB pathway is the major replication restart pathway. During primosome assembly it facilitates complex formation between PriA and DnaT on DNA; stabilizes PriA on DNA. Stimulates the DNA unwinding activity of PriA helicase. This chain is Replication restart protein PriB, found in Vibrio parahaemolyticus serotype O3:K6 (strain RIMD 2210633).